Consider the following 350-residue polypeptide: tRNA N6-adenosine threonylcarbamoyltransferase (350 aa).

The Fe cation site is built by histidine 115 and histidine 119. Substrate is bound by residues isoleucine 137 to glycine 141, aspartate 170, glycine 183, and asparagine 281. Aspartate 309 provides a ligand contact to Fe cation.

It belongs to the KAE1 / TsaD family. Fe(2+) is required as a cofactor.

Its subcellular location is the cytoplasm. It catalyses the reaction L-threonylcarbamoyladenylate + adenosine(37) in tRNA = N(6)-L-threonylcarbamoyladenosine(37) in tRNA + AMP + H(+). In terms of biological role, required for the formation of a threonylcarbamoyl group on adenosine at position 37 (t(6)A37) in tRNAs that read codons beginning with adenine. Is involved in the transfer of the threonylcarbamoyl moiety of threonylcarbamoyl-AMP (TC-AMP) to the N6 group of A37, together with TsaE and TsaB. TsaD likely plays a direct catalytic role in this reaction. The sequence is that of tRNA N6-adenosine threonylcarbamoyltransferase from Ehrlichia canis (strain Jake).